The sequence spans 501 residues: Betaine aldehyde dehydrogenase, chloroplastic (501 aa).

A chloroplast-targeting transit peptide spans 1-7 (MAIRVPS). Residue 238–243 (GSTATG) participates in NAD(+) binding. The Proton acceptor role is filled by E260. C294 acts as the Nucleophile in catalysis.

This sequence belongs to the aldehyde dehydrogenase family. As to quaternary structure, homodimer.

The protein localises to the plastid. It is found in the chloroplast. The catalysed reaction is betaine aldehyde + NAD(+) + H2O = glycine betaine + NADH + 2 H(+). It functions in the pathway amine and polyamine biosynthesis; betaine biosynthesis via choline pathway; betaine from betaine aldehyde: step 1/1. This Amaranthus hypochondriacus (Prince-of-Wales feather) protein is Betaine aldehyde dehydrogenase, chloroplastic (BADH4).